A 326-amino-acid chain; its full sequence is GTP 3',8-cyclase (326 aa).

A Radical SAM core domain is found at 7–232 (GFGRSFPYLR…PRAADAGPAR (226 aa)). Arg16 contributes to the GTP binding site. Residues Cys23 and Cys27 each contribute to the [4Fe-4S] cluster site. Tyr29 serves as a coordination point for S-adenosyl-L-methionine. Cys30 is a binding site for [4Fe-4S] cluster. Arg65 serves as a coordination point for GTP. Gly69 lines the S-adenosyl-L-methionine pocket. GTP is bound at residue Thr96. Ser120 serves as a coordination point for S-adenosyl-L-methionine. GTP is bound at residue Lys157. S-adenosyl-L-methionine is bound at residue Met191. 2 residues coordinate [4Fe-4S] cluster: Cys254 and Cys257. 259–261 (RLR) contributes to the GTP binding site. [4Fe-4S] cluster is bound at residue Cys271.

The protein belongs to the radical SAM superfamily. MoaA family. In terms of assembly, monomer and homodimer. It depends on [4Fe-4S] cluster as a cofactor.

The catalysed reaction is GTP + AH2 + S-adenosyl-L-methionine = (8S)-3',8-cyclo-7,8-dihydroguanosine 5'-triphosphate + 5'-deoxyadenosine + L-methionine + A + H(+). The protein operates within cofactor biosynthesis; molybdopterin biosynthesis. In terms of biological role, catalyzes the cyclization of GTP to (8S)-3',8-cyclo-7,8-dihydroguanosine 5'-triphosphate. The polypeptide is GTP 3',8-cyclase (Stenotrophomonas maltophilia (strain K279a)).